A 1037-amino-acid chain; its full sequence is MEGRNAAAEPFVWVNSASAHSQSVAKAKYEFLFGKSEEKTPDSSDHGGSTLLPPTVTNEFPEYGTMEEGGEGLRASLDFDAKSPPCRLPGQQAVHLLAGQDSILNSVTEGPNDAPQCHPQEQSLQPIDSLISALKATEARIASGTFQATKVLDKDANFSVYQVDKELSTASHKPQRAHRTFPVGPGKSPDIPLSAEVPTEENLSLHIQEDLSALLPEEAQAHRSQITNYRRQGPLRVPESACPVSSSSAGSHNPVDRVGALREQRSDLGREHPRGYDRGGSMGRQGRIKHVEFQGVEILWTGEEAESRHPPERTASPVSKEFAKRPSHSSPACGVCSTSTHLTGDVWDETCKAPSERPGTSAGTLSPMPLGESGEDDVFLRESKEHLEENFAIQGDKERILDQEEHLRGDDDILGPGYTEDSTDVYSSQFETILDNTSLYYSAESLETLYSEPDSYFSFEMPLTPMIQQRIKEGGQFLERTSVGGQHDVLSVSADGGIVMGYSAGITNGLHDSANSVYTRGPQEIAFWGSRDRCFAEGKTTGVDAGSEMGSTDILEKETTESLSNGTNSNVEAAKRLAKRLYHLDRFKRSDVAKHLGKNNEFSKLVAEEYLKFFDFTGMTLDQSLRYFLKAFSLVGETQERERVLIHFSNRYFSCNPDTITSKDGVHCLTCAMMLLNTDLHGHVNIGKKMTCQEFITNLQGVNEGGDFSKDLLKALYNSIKNEKLEWAVDDEEKKKSPSEGTDEKANGTHPKTISRIGSTTNPFLDIPHDPNAAVYKSGFLARKIHADMDGKKTPRGKRGWKTFYAVLKGTVLYLQKDEYKPEKSLSDEDLKNAVSVHHALASKATDYEKKPNVFKLKTADWRVLLFQTQSPEEMQGWINKINCVAAVFSAPPFPAAIGSQKKFSRPLLPATTTKLSQEEQLKSHESKLKQITTELAEHRSYPPDKKVKAKDVDEYKLKDHYLEFEKTRYEIYVSVLKEGGKELLTTDGNEPVGLKKSHSSPSLNPDASPVTAKVKRNVSERKDHRPETPGIKQKVT.

Residues 37–70 (EEKTPDSSDHGGSTLLPPTVTNEFPEYGTMEEGG) are disordered. Phosphoserine is present on S76. Disordered regions lie at residues 169–189 (TASH…GKSP), 236–255 (RVPE…HNPV), 262–284 (REQR…SMGR), 304–335 (EAES…ACGV), and 353–375 (APSE…ESGE). Residues 237 to 251 (VPESACPVSSSSAGS) are compositionally biased toward low complexity. The segment covering 262–277 (REQRSDLGREHPRGYD) has biased composition (basic and acidic residues). The 209-residue stretch at 515–723 (NSVYTRGPQE…KALYNSIKNE (209 aa)) folds into the SEC7 domain. The span at 730–747 (DDEEKKKSPSEGTDEKAN) shows a compositional bias: basic and acidic residues. Residues 730–762 (DDEEKKKSPSEGTDEKANGTHPKTISRIGSTTN) are disordered. Residues 750–762 (HPKTISRIGSTTN) show a composition bias toward polar residues. The residue at position 759 (S759) is a Phosphoserine. Residues 774-887 (AVYKSGFLAR…WINKINCVAA (114 aa)) form the PH domain. Positions 911-941 (ATTTKLSQEEQLKSHESKLKQITTELAEHRS) form a coiled coil. Positions 984–1037 (LLTTDGNEPVGLKKSHSSPSLNPDASPVTAKVKRNVSERKDHRPETPGIKQKVT) are disordered. Phosphoserine is present on residues S998, S1000, S1001, S1003, and S1009. Residues 1018-1028 (NVSERKDHRPE) show a composition bias toward basic and acidic residues.

As to expression, ubiquitously expressed, with highest levels in liver. Present in brain, with highest levels in olfactory bulb, cortex, hippocampal pyramidal cell layer and cerebellar granule cell layer (at protein level).

The protein localises to the cell membrane. It is found in the cell projection. It localises to the ruffle membrane. The protein resides in the postsynaptic density. Guanine nucleotide exchange factor for ARF6. This chain is PH and SEC7 domain-containing protein 3 (Psd3), found in Mus musculus (Mouse).